The chain runs to 158 residues: Transcription elongation factor GreA (158 aa).

Residues 53-73 (EQQGMVEARIRDIEAKLSNAQ) adopt a coiled-coil conformation.

This sequence belongs to the GreA/GreB family.

In terms of biological role, necessary for efficient RNA polymerase transcription elongation past template-encoded arresting sites. The arresting sites in DNA have the property of trapping a certain fraction of elongating RNA polymerases that pass through, resulting in locked ternary complexes. Cleavage of the nascent transcript by cleavage factors such as GreA or GreB allows the resumption of elongation from the new 3'terminus. GreA releases sequences of 2 to 3 nucleotides. This chain is Transcription elongation factor GreA, found in Pseudomonas aeruginosa (strain ATCC 15692 / DSM 22644 / CIP 104116 / JCM 14847 / LMG 12228 / 1C / PRS 101 / PAO1).